The chain runs to 341 residues: Zinc finger protein ZIC 4 (341 aa).

The interval 36–66 (HHGPQLAASSNPSVLPGLHEQPPQASHSRPL) is disordered. A C2H2-type 1; atypical zinc finger spans residues 135 to 169 (LICKWLGDDSPMSPRPCSKTFSTMHELVTHVTVEH). The segment at 178–205 (HICFWEECPRQGKPFKAKYKLVNHIRVH) adopts a C2H2-type 2; atypical zinc-finger fold. 3 C2H2-type zinc fingers span residues 211–235 (FPCP…KRTH), 241–265 (FRCE…SHVH), and 271–295 (YMCK…MKVH). Positions 289-309 (RKHMKVHGRSPPPSSGYDSAI) are disordered.

It belongs to the GLI C2H2-type zinc-finger protein family. As to expression, exclusively expressed in the cerebellum.

The protein localises to the nucleus. In terms of biological role, binds to DNA. This Mus musculus (Mouse) protein is Zinc finger protein ZIC 4 (Zic4).